We begin with the raw amino-acid sequence, 35 residues long: Alpha-amanitin proprotein 2 (35 aa).

The propeptide occupies 1 to 10 (MFDTNSTRLP). I11 carries the (3R,4R)-4,5-dihydroxyisoleucine; in form alpha-amanitin modification. I11 is modified ((3R,4S)-4-hydroxyisoleucine; in form gamma-amanitin). The cyclopeptide (Ile-Pro) cross-link spans 11-18 (IWGIGCNP). A cross-link (2'-cysteinyl-6'-hydroxytryptophan sulfoxide (Trp-Cys)) is located at residues 12–16 (WGIGC). At P18 the chain carries 4-hydroxyproline. Residues 19–35 (WTAEHVDQTLVSGNDIC) constitute a propeptide that is removed on maturation.

It belongs to the MSDIN fungal toxin family. In terms of processing, processed by the macrocyclase-peptidase enzyme POPB to yield a toxic bicyclic octapeptide. POPB first removes 10 residues from the N-terminus. Conformational trapping of the remaining peptide forces the enzyme to release this intermediate rather than proceed to macrocyclization. The enzyme rebinds the remaining peptide in a different conformation and catalyzes macrocyclization of the N-terminal 8 residues.

Major toxin belonging to the bicyclic octapeptides amatoxins that acts by binding non-competitively to RNA polymerase II and greatly slowing the elongation of transcripts from target promoters. This is Alpha-amanitin proprotein 2 from Galerina marginata (strain CBS 339.88).